Here is a 334-residue protein sequence, read N- to C-terminus: Ketol-acid reductoisomerase (NADP(+)) (334 aa).

A KARI N-terminal Rossmann domain is found at 2 to 182 (PKMYYEKDTD…GGARAGVLET (181 aa)). Residues 25 to 28 (YGSQ), S51, S53, and 83 to 86 (DEKQ) contribute to the NADP(+) site. The active site involves H108. NADP(+) is bound at residue G134. The region spanning 183 to 328 (TFKDETETDL…KELRGMMSWI (146 aa)) is the KARI C-terminal knotted domain. Residues D191, E195, E227, and E231 each contribute to the Mg(2+) site. S252 serves as a coordination point for substrate.

It belongs to the ketol-acid reductoisomerase family. Mg(2+) is required as a cofactor.

It carries out the reaction (2R)-2,3-dihydroxy-3-methylbutanoate + NADP(+) = (2S)-2-acetolactate + NADPH + H(+). It catalyses the reaction (2R,3R)-2,3-dihydroxy-3-methylpentanoate + NADP(+) = (S)-2-ethyl-2-hydroxy-3-oxobutanoate + NADPH + H(+). It functions in the pathway amino-acid biosynthesis; L-isoleucine biosynthesis; L-isoleucine from 2-oxobutanoate: step 2/4. The protein operates within amino-acid biosynthesis; L-valine biosynthesis; L-valine from pyruvate: step 2/4. Its function is as follows. Involved in the biosynthesis of branched-chain amino acids (BCAA). Catalyzes an alkyl-migration followed by a ketol-acid reduction of (S)-2-acetolactate (S2AL) to yield (R)-2,3-dihydroxy-isovalerate. In the isomerase reaction, S2AL is rearranged via a Mg-dependent methyl migration to produce 3-hydroxy-3-methyl-2-ketobutyrate (HMKB). In the reductase reaction, this 2-ketoacid undergoes a metal-dependent reduction by NADPH to yield (R)-2,3-dihydroxy-isovalerate. In Clostridium beijerinckii (strain ATCC 51743 / NCIMB 8052) (Clostridium acetobutylicum), this protein is Ketol-acid reductoisomerase (NADP(+)).